A 328-amino-acid chain; its full sequence is scyllo-inositol 2-dehydrogenase (NADP(+)) IolU (328 aa).

It belongs to the Gfo/Idh/MocA family.

It catalyses the reaction scyllo-inositol + NADP(+) = scyllo-inosose + NADPH + H(+). Its function is as follows. Catalyzes the NADPH-dependent reduction of scyllo-inosose (SIS) to scyllo-inositol (SI) in vitro, but is unable to dehydrogenate scyllo-inositol and myo-inositol. Is less efficient than the functional paralog IolW. Under physiological conditions, may primarily function as an NADPH-dependent oxidoreductase that reduces carbonyl group(s) in its substrates. Cannot use NADH instead of NADPH. In Bacillus subtilis (strain 168), this protein is scyllo-inositol 2-dehydrogenase (NADP(+)) IolU.